The chain runs to 123 residues: Holo-[acyl-carrier-protein] synthase (123 aa).

Asp-8 and Glu-60 together coordinate Mg(2+).

It belongs to the P-Pant transferase superfamily. AcpS family. Requires Mg(2+) as cofactor.

The protein resides in the cytoplasm. The catalysed reaction is apo-[ACP] + CoA = holo-[ACP] + adenosine 3',5'-bisphosphate + H(+). Its function is as follows. Transfers the 4'-phosphopantetheine moiety from coenzyme A to a Ser of acyl-carrier-protein. The chain is Holo-[acyl-carrier-protein] synthase from Ehrlichia chaffeensis (strain ATCC CRL-10679 / Arkansas).